We begin with the raw amino-acid sequence, 425 residues long: Protein CLP1 homolog (425 aa).

Residues Glu18, Lys59, and 121–126 each bind ATP; that span reads DVGKST.

This sequence belongs to the Clp1 family. Clp1 subfamily.

The protein resides in the nucleus. In terms of biological role, required for endonucleolytic cleavage during polyadenylation-dependent pre-mRNA 3'-end formation. The chain is Protein CLP1 homolog (cbc) from Drosophila mojavensis (Fruit fly).